Reading from the N-terminus, the 209-residue chain is NADH-ubiquinone oxidoreductase subunit 9 (209 aa).

It belongs to the complex I 30 kDa subunit family. As to quaternary structure, complex I is composed of about 30 different subunits.

The protein localises to the mitochondrion inner membrane. It catalyses the reaction a ubiquinone + NADH + 5 H(+)(in) = a ubiquinol + NAD(+) + 4 H(+)(out). Core subunit of the mitochondrial membrane respiratory chain NADH dehydrogenase (Complex I) that is believed to belong to the minimal assembly required for catalysis. Complex I functions in the transfer of electrons from NADH to the respiratory chain. The immediate electron acceptor for the enzyme is believed to be ubiquinone. The polypeptide is NADH-ubiquinone oxidoreductase subunit 9 (NAD9) (Paramecium tetraurelia).